The sequence spans 419 residues: Homeobox-containing protein 1 (419 aa).

One can recognise an HNF-p1 domain in the interval 18-49 (DEPRFTIEQIDLLQRLRRTGMTKHEILHALET). The interval 56 to 152 (EHSDKFGRRS…GQRSYSFEAS (97 aa)) is disordered. A Glycyl lysine isopeptide (Lys-Gly) (interchain with G-Cter in SUMO2) cross-link involves residue Lys60. 2 stretches are compositionally biased toward low complexity: residues 64–73 (RSSYGGSSYG) and 81–93 (ASSSTATASTQTQ). Residues 94–132 (HSGMSPSPSNSYDTSPLPCTTNQNGRENNDRLSTSNGKM) are compositionally biased toward polar residues. A Glycyl lysine isopeptide (Lys-Gly) (interchain with G-Cter in SUMO2) cross-link involves residue Lys131. Residues 145-241 (RSYSFEASEE…PGATLSMRPA (97 aa)) enclose the POU-specific atypical domain. At Ser148 the chain carries Phosphoserine. A Glycyl lysine isopeptide (Lys-Gly) (interchain with G-Cter in SUMO2) cross-link involves residue Lys161. Ser170 is subject to Phosphoserine. Residues Lys174, Lys217, and Lys310 each participate in a glycyl lysine isopeptide (Lys-Gly) (interchain with G-Cter in SUMO2) cross-link. A DNA-binding region (homeobox) is located at residues 267-341 (RRGSRFTWRK…NRRKEIKRRA (75 aa)). A disordered region spans residues 352–384 (IDVQSPGGHSNSDDVDGNDYSEQDDSTSHSDHQ). Positions 364 to 376 (DDVDGNDYSEQDD) are enriched in acidic residues. Lys412 participates in a covalent cross-link: Glycyl lysine isopeptide (Lys-Gly) (interchain with G-Cter in SUMO1); alternate. Lys412 is covalently cross-linked (Glycyl lysine isopeptide (Lys-Gly) (interchain with G-Cter in SUMO2); alternate).

Associates with the telomerase holoenzyme complex. Interacts with DKC1, XRCC6 and COIL.

It localises to the nucleus. The protein localises to the cytoplasm. The protein resides in the chromosome. It is found in the telomere. Its subcellular location is the cajal body. It localises to the PML body. Functionally, binds directly to 5'-TTAGGG-3' repeats in telomeric DNA. Associates with the telomerase complex at sites of active telomere processing and positively regulates telomere elongation. Important for TERT binding to chromatin, indicating a role in recruitment of the telomerase complex to telomeres. Also plays a role in the alternative lengthening of telomeres (ALT) pathway in telomerase-negative cells where it promotes formation and/or maintenance of ALT-associated promyelocytic leukemia bodies (APBs). Enhances formation of telomere C-circles in ALT cells, suggesting a possible role in telomere recombination. Might also be involved in the DNA damage response at telomeres. This chain is Homeobox-containing protein 1 (Hmbox1), found in Mus musculus (Mouse).